A 588-amino-acid polypeptide reads, in one-letter code: DNA ligase (588 aa).

Glu-248 provides a ligand contact to ATP. The active-site N6-AMP-lysine intermediate is Lys-250. ATP-binding residues include Arg-255, Arg-270, Glu-300, Phe-341, Arg-418, and Lys-424.

It belongs to the ATP-dependent DNA ligase family. Mg(2+) is required as a cofactor.

The catalysed reaction is ATP + (deoxyribonucleotide)n-3'-hydroxyl + 5'-phospho-(deoxyribonucleotide)m = (deoxyribonucleotide)n+m + AMP + diphosphate.. In terms of biological role, DNA ligase that seals nicks in double-stranded DNA during DNA replication, DNA recombination and DNA repair. The protein is DNA ligase of Thermoplasma volcanium (strain ATCC 51530 / DSM 4299 / JCM 9571 / NBRC 15438 / GSS1).